The primary structure comprises 257 residues: Imidazole glycerol phosphate synthase subunit HisF (257 aa).

Active-site residues include Asp-12 and Asp-131.

It belongs to the HisA/HisF family. In terms of assembly, heterodimer of HisH and HisF.

The protein resides in the cytoplasm. It catalyses the reaction 5-[(5-phospho-1-deoxy-D-ribulos-1-ylimino)methylamino]-1-(5-phospho-beta-D-ribosyl)imidazole-4-carboxamide + L-glutamine = D-erythro-1-(imidazol-4-yl)glycerol 3-phosphate + 5-amino-1-(5-phospho-beta-D-ribosyl)imidazole-4-carboxamide + L-glutamate + H(+). It functions in the pathway amino-acid biosynthesis; L-histidine biosynthesis; L-histidine from 5-phospho-alpha-D-ribose 1-diphosphate: step 5/9. IGPS catalyzes the conversion of PRFAR and glutamine to IGP, AICAR and glutamate. The HisF subunit catalyzes the cyclization activity that produces IGP and AICAR from PRFAR using the ammonia provided by the HisH subunit. This is Imidazole glycerol phosphate synthase subunit HisF from Burkholderia thailandensis (strain ATCC 700388 / DSM 13276 / CCUG 48851 / CIP 106301 / E264).